A 291-amino-acid polypeptide reads, in one-letter code: N-acetylmannosamine kinase (291 aa).

ATP contacts are provided by residues 5 to 12 (AIDIGGTK) and 132 to 139 (GVGGGVVS). 4 residues coordinate Zn(2+): H156, C166, C168, and C173.

Belongs to the ROK (NagC/XylR) family. NanK subfamily. As to quaternary structure, homodimer.

It catalyses the reaction an N-acyl-D-mannosamine + ATP = an N-acyl-D-mannosamine 6-phosphate + ADP + H(+). The protein operates within amino-sugar metabolism; N-acetylneuraminate degradation; D-fructose 6-phosphate from N-acetylneuraminate: step 2/5. Functionally, catalyzes the phosphorylation of N-acetylmannosamine (ManNAc) to ManNAc-6-P. This Escherichia coli O7:K1 (strain IAI39 / ExPEC) protein is N-acetylmannosamine kinase.